A 212-amino-acid chain; its full sequence is Probable nicotinate-nucleotide adenylyltransferase (212 aa).

Belongs to the NadD family.

The catalysed reaction is nicotinate beta-D-ribonucleotide + ATP + H(+) = deamido-NAD(+) + diphosphate. The protein operates within cofactor biosynthesis; NAD(+) biosynthesis; deamido-NAD(+) from nicotinate D-ribonucleotide: step 1/1. Functionally, catalyzes the reversible adenylation of nicotinate mononucleotide (NaMN) to nicotinic acid adenine dinucleotide (NaAD). The polypeptide is Probable nicotinate-nucleotide adenylyltransferase (Saccharopolyspora erythraea (strain ATCC 11635 / DSM 40517 / JCM 4748 / NBRC 13426 / NCIMB 8594 / NRRL 2338)).